The sequence spans 721 residues: MTPIQKTATVGGKEVLLETGKVAKQAHGSVWVRLGDSIVLVTAVSAAEKKEGIDFFPLTVDYQEKLFAAGRVPGSFFRREGRPTEKETLTSRLVDRSCRPLFAEGYSNETQVIATVISFDQENDTDVLALTGASAALHISDIPFGGPIAGVRVARVGGQLVANPTLAQRADADLDVVMAASRDAIVMVEGGAQEVSEAVMIEALLFGQAAVQPLLDAQDALRAATGNKPRRAFDPPKNDVELRAKVKALTWEKVKEAYGRDEKHDRYGRLSEIKKELLQALKEEAAGDAAKLATIALREKEIKGYYEDVKYDYMRKMITDERRRIGGRGMADIRKITCEVGLLPRVHGSSLFTRGETQALVATTLGTAEDEQRVEMLTGMVFKKFMLHYNFPPFSVGEVKFLRSPGRREIGHGALAERALRAVMPPEDQFPYTVRVVSDIMESNGSSSMASVCGGCLSLMDAGVPIKAPVAGIAMGLIKEGEKIAILSDILGDEDHLGDMDFKVCGTAAGITSIQMDIKIGGVTREILEQALSQAAEGRKHILGEMAKALSAPRGSISAYAPRITTIKIRPERIKDIIGPGGKTIKDITARTGTSINIEDDGSVSIASPNQDKVEEAIKMIRGLTQEAEVGRIYMGTVRKIAEFGAFVEIFPGTDGLIHISELSDKRVKSVSDVLSEGEEVMVKVISVDRSGKIRLSRKEALADSAKKSEGTEPPKGEPAK.

Mg(2+) is bound by residues D495 and D501. In terms of domain architecture, KH spans 562-621 (PRITTIKIRPERIKDIIGPGGKTIKDITARTGTSINIEDDGSVSIASPNQDKVEEAIKMI). The 69-residue stretch at 631 to 699 (GRIYMGTVRK…RSGKIRLSRK (69 aa)) folds into the S1 motif domain. Residues 699–721 (KEALADSAKKSEGTEPPKGEPAK) are disordered.

This sequence belongs to the polyribonucleotide nucleotidyltransferase family. Requires Mg(2+) as cofactor.

Its subcellular location is the cytoplasm. It carries out the reaction RNA(n+1) + phosphate = RNA(n) + a ribonucleoside 5'-diphosphate. Its function is as follows. Involved in mRNA degradation. Catalyzes the phosphorolysis of single-stranded polyribonucleotides processively in the 3'- to 5'-direction. This Anaeromyxobacter dehalogenans (strain 2CP-C) protein is Polyribonucleotide nucleotidyltransferase.